The primary structure comprises 208 residues: NAD-dependent protein deacylase (208 aa).

The 208-residue stretch at 1–208 (MKPICVVLSG…NTGFNPVTGW (208 aa)) folds into the Deacetylase sirtuin-type domain. 10–29 (GAGISAESGIPTYRAEDGLW) provides a ligand contact to NAD(+). Residues tyrosine 54 and arginine 57 each contribute to the substrate site. 87 to 90 (QNVE) is an NAD(+) binding site. The Proton acceptor role is filled by histidine 105. NAD(+) contacts are provided by residues 170 to 172 (GTS) and 197 to 199 (NPN).

This sequence belongs to the sirtuin family. Class III subfamily.

The protein resides in the cytoplasm. It catalyses the reaction N(6)-acetyl-L-lysyl-[protein] + NAD(+) + H2O = 2''-O-acetyl-ADP-D-ribose + nicotinamide + L-lysyl-[protein]. It carries out the reaction N(6)-succinyl-L-lysyl-[protein] + NAD(+) + H2O = 2''-O-succinyl-ADP-D-ribose + nicotinamide + L-lysyl-[protein]. NAD-dependent lysine deacetylase and desuccinylase that specifically removes acetyl and succinyl groups on target proteins. Modulates the activities of several proteins which are inactive in their acylated form. The polypeptide is NAD-dependent protein deacylase (Aggregatibacter actinomycetemcomitans (Actinobacillus actinomycetemcomitans)).